Reading from the N-terminus, the 533-residue chain is Lanosterol 14-alpha demethylase (533 aa).

Cys-472 lines the heme pocket.

It belongs to the cytochrome P450 family. Heme is required as a cofactor.

It localises to the membrane. The catalysed reaction is a 14alpha-methyl steroid + 3 reduced [NADPH--hemoprotein reductase] + 3 O2 = a Delta(14) steroid + formate + 3 oxidized [NADPH--hemoprotein reductase] + 4 H2O + 4 H(+). It catalyses the reaction a 14alpha-methyl steroid + reduced [NADPH--hemoprotein reductase] + O2 = a 14alpha-hydroxymethyl steroid + oxidized [NADPH--hemoprotein reductase] + H2O + H(+). It carries out the reaction a 14alpha-hydroxymethyl steroid + reduced [NADPH--hemoprotein reductase] + O2 = a 14alpha-formyl steroid + oxidized [NADPH--hemoprotein reductase] + 2 H2O + H(+). The enzyme catalyses a 14alpha-formyl steroid + reduced [NADPH--hemoprotein reductase] + O2 = a Delta(14) steroid + formate + oxidized [NADPH--hemoprotein reductase] + H2O + 2 H(+). The catalysed reaction is lanosterol + 3 reduced [NADPH--hemoprotein reductase] + 3 O2 = 4,4-dimethyl-5alpha-cholesta-8,14,24-trien-3beta-ol + formate + 3 oxidized [NADPH--hemoprotein reductase] + 4 H2O + 4 H(+). It catalyses the reaction lanosterol + reduced [NADPH--hemoprotein reductase] + O2 = 32-hydroxylanosterol + oxidized [NADPH--hemoprotein reductase] + H2O + H(+). It carries out the reaction 32-hydroxylanosterol + reduced [NADPH--hemoprotein reductase] + O2 = 32-oxolanosterol + oxidized [NADPH--hemoprotein reductase] + 2 H2O + H(+). The enzyme catalyses 32-oxolanosterol + reduced [NADPH--hemoprotein reductase] + O2 = 4,4-dimethyl-5alpha-cholesta-8,14,24-trien-3beta-ol + formate + oxidized [NADPH--hemoprotein reductase] + H2O + 2 H(+). The catalysed reaction is eburicol + 3 reduced [NADPH--hemoprotein reductase] + 3 O2 = 14-demethyleburicol + formate + 3 oxidized [NADPH--hemoprotein reductase] + 4 H2O + 4 H(+). It catalyses the reaction eburicol + reduced [NADPH--hemoprotein reductase] + O2 = 32-hydroxyeburicol + oxidized [NADPH--hemoprotein reductase] + H2O + H(+). It carries out the reaction 32-hydroxyeburicol + reduced [NADPH--hemoprotein reductase] + O2 = 32-oxoeburicol + oxidized [NADPH--hemoprotein reductase] + 2 H2O + H(+). The enzyme catalyses 32-oxoeburicol + reduced [NADPH--hemoprotein reductase] + O2 = 14-demethyleburicol + formate + oxidized [NADPH--hemoprotein reductase] + H2O + 2 H(+). Its pathway is steroid biosynthesis; zymosterol biosynthesis; zymosterol from lanosterol: step 1/6. In terms of biological role, sterol 14alpha-demethylase that plays a critical role in the third module of ergosterol biosynthesis pathway, being ergosterol the major sterol component in fungal membranes that participates in a variety of functions. The third module or late pathway involves the ergosterol synthesis itself through consecutive reactions that mainly occur in the endoplasmic reticulum (ER) membrane. In filamentous fungi, during the initial step of this module, lanosterol (lanosta-8,24-dien-3beta-ol) can be metabolized to eburicol. Sterol 14alpha-demethylase catalyzes the three-step oxidative removal of the 14alpha-methyl group (C-32) of both these sterols in the form of formate, and converts eburicol and lanosterol to 14-demethyleburicol (4,4,24-trimethylergosta-8,14,24(28)-trienol) and 4,4-dimethyl-5alpha-cholesta-8,14,24-trien-3beta-ol, respectively, which are further metabolized by other enzymes in the pathway to ergosterol. Can also use substrates not intrinsic to fungi, such as 24,25-dihydrolanosterol (DHL), producing 4,4-dimethyl-8,14-cholestadien-3-beta-ol, but at lower rates than the endogenous substrates. The chain is Lanosterol 14-alpha demethylase (ERG11) from Candida glabrata (strain ATCC 2001 / BCRC 20586 / JCM 3761 / NBRC 0622 / NRRL Y-65 / CBS 138) (Yeast).